Consider the following 393-residue polypeptide: NAD(P)H-quinone oxidoreductase subunit H, chloroplastic (393 aa).

Belongs to the complex I 49 kDa subunit family. NDH is composed of at least 16 different subunits, 5 of which are encoded in the nucleus.

It is found in the plastid. The protein localises to the chloroplast thylakoid membrane. The catalysed reaction is a plastoquinone + NADH + (n+1) H(+)(in) = a plastoquinol + NAD(+) + n H(+)(out). It carries out the reaction a plastoquinone + NADPH + (n+1) H(+)(in) = a plastoquinol + NADP(+) + n H(+)(out). Functionally, NDH shuttles electrons from NAD(P)H:plastoquinone, via FMN and iron-sulfur (Fe-S) centers, to quinones in the photosynthetic chain and possibly in a chloroplast respiratory chain. The immediate electron acceptor for the enzyme in this species is believed to be plastoquinone. Couples the redox reaction to proton translocation, and thus conserves the redox energy in a proton gradient. The protein is NAD(P)H-quinone oxidoreductase subunit H, chloroplastic of Anthoceros angustus (Hornwort).